The primary structure comprises 140 residues: MRIIGLDVGTKTVGVALSDPLGITAQPFETITRKENNKLRRTYARIEQIISEYDVTEIVVGYPKNMDDTIGERAKACEEFAAALERRTGLPVTLWDERLTTVEADEVLEECGMRRENRKTVIDQLAAVFILRGYMESKQK.

Belongs to the YqgF nuclease family.

The protein localises to the cytoplasm. Its function is as follows. Could be a nuclease involved in processing of the 5'-end of pre-16S rRNA. This chain is Putative pre-16S rRNA nuclease, found in Lachnospira eligens (strain ATCC 27750 / DSM 3376 / VPI C15-48 / C15-B4) (Eubacterium eligens).